The following is a 580-amino-acid chain: Proline--tRNA ligase (580 aa).

The protein belongs to the class-II aminoacyl-tRNA synthetase family. ProS type 1 subfamily. Homodimer.

It localises to the cytoplasm. It carries out the reaction tRNA(Pro) + L-proline + ATP = L-prolyl-tRNA(Pro) + AMP + diphosphate. In terms of biological role, catalyzes the attachment of proline to tRNA(Pro) in a two-step reaction: proline is first activated by ATP to form Pro-AMP and then transferred to the acceptor end of tRNA(Pro). As ProRS can inadvertently accommodate and process non-cognate amino acids such as alanine and cysteine, to avoid such errors it has two additional distinct editing activities against alanine. One activity is designated as 'pretransfer' editing and involves the tRNA(Pro)-independent hydrolysis of activated Ala-AMP. The other activity is designated 'posttransfer' editing and involves deacylation of mischarged Ala-tRNA(Pro). The misacylated Cys-tRNA(Pro) is not edited by ProRS. The chain is Proline--tRNA ligase from Polynucleobacter necessarius subsp. necessarius (strain STIR1).